Here is a 208-residue protein sequence, read N- to C-terminus: Ribosomal RNA large subunit methyltransferase E (208 aa).

S-adenosyl-L-methionine-binding residues include Gly-62, Trp-64, Asp-82, Asp-98, and Asp-123. Lys-163 acts as the Proton acceptor in catalysis.

This sequence belongs to the class I-like SAM-binding methyltransferase superfamily. RNA methyltransferase RlmE family.

Its subcellular location is the cytoplasm. It carries out the reaction uridine(2552) in 23S rRNA + S-adenosyl-L-methionine = 2'-O-methyluridine(2552) in 23S rRNA + S-adenosyl-L-homocysteine + H(+). Its function is as follows. Specifically methylates the uridine in position 2552 of 23S rRNA at the 2'-O position of the ribose in the fully assembled 50S ribosomal subunit. The protein is Ribosomal RNA large subunit methyltransferase E of Glaesserella parasuis serovar 5 (strain SH0165) (Haemophilus parasuis).